We begin with the raw amino-acid sequence, 26 residues long: Dermaseptin-B5 (26 aa).

The residue at position 26 (Val-26) is a Valine amide.

The protein belongs to the frog skin active peptide (FSAP) family. Dermaseptin subfamily. In terms of tissue distribution, expressed by the skin glands.

The protein localises to the secreted. In terms of biological role, possesses a potent antimicrobial activity against Gram-positive and Gram-negative bacteria. Probably acts by disturbing membrane functions with its amphipathic structure. This Phyllomedusa bicolor (Two-colored leaf frog) protein is Dermaseptin-B5.